Consider the following 105-residue polypeptide: Thioredoxin (105 aa).

The 105-residue stretch at M1 to I105 folds into the Thioredoxin domain. C30 and C33 are joined by a disulfide.

Belongs to the thioredoxin family.

Its function is as follows. Component of the thioredoxin-thioredoxin reductase system. Participates in various redox reactions through the reversible oxidation of its active center dithiol to a disulfide and catalyzes dithiol-disulfide exchange reactions. In Rickettsia bellii (strain RML369-C), this protein is Thioredoxin (trxA).